The sequence spans 86 residues: Large ribosomal subunit protein bL31B (86 aa).

The protein belongs to the bacterial ribosomal protein bL31 family. Type B subfamily. As to quaternary structure, part of the 50S ribosomal subunit.

The protein is Large ribosomal subunit protein bL31B of Streptococcus agalactiae serotype Ia (strain ATCC 27591 / A909 / CDC SS700).